Here is a 272-residue protein sequence, read N- to C-terminus: MADAAAPGEDDAAWERAIAAAVKNAPFSAPKTLTLDGAVKSTTGRLPSPSLLGRYPSLEELSVAGARLSSLAGLPRLPALRRLSLPDNRLSGAASLAAVAESCGATLRHLDLGNNRFADVAELAPLAPHGVESLDLYQCPVTKAKGYRDKVFALIPSLKFLDGMDAEGNDCLDSDDEEDEEEDEGEEGEGEGDEEEEEEGGEEGEGDEDDEEEGDEEEDEEEGEEEAEDEEDEAGADEEDESKVANGSKGSSGSAQPNKRKRDSEDDANGDN.

LRR repeat units lie at residues 57 to 78 (SLEE…PRLP), 79 to 100 (ALRR…AAVA), and 106 to 127 (TLRH…APLA). One can recognise an LRRCT domain in the interval 139–184 (CPVTKAKGYRDKVFALIPSLKFLDGMDAEGNDCLDSDDEEDEEEDE). The tract at residues 163-272 (GMDAEGNDCL…DSEDDANGDN (110 aa)) is disordered. The segment covering 164–241 (MDAEGNDCLD…DEAGADEEDE (78 aa)) has biased composition (acidic residues). Positions 248–257 (SKGSSGSAQP) are enriched in polar residues.

Belongs to the ANP32 family.

The polypeptide is Acidic leucine-rich nuclear phosphoprotein 32-related protein 2 (Oryza sativa subsp. japonica (Rice)).